We begin with the raw amino-acid sequence, 77 residues long: Translation initiation factor IF-1, chloroplastic (77 aa).

One can recognise an S1-like domain in the interval 1-71 (MKEQKLIHEG…TRGRIIYRLR (71 aa)).

This sequence belongs to the IF-1 family. Component of the 30S ribosomal translation pre-initiation complex which assembles on the 30S ribosome in the order IF-2 and IF-3, IF-1 and N-formylmethionyl-tRNA(fMet); mRNA recruitment can occur at any time during PIC assembly.

It localises to the plastid. The protein resides in the chloroplast. Its function is as follows. One of the essential components for the initiation of protein synthesis. Stabilizes the binding of IF-2 and IF-3 on the 30S subunit to which N-formylmethionyl-tRNA(fMet) subsequently binds. Helps modulate mRNA selection, yielding the 30S pre-initiation complex (PIC). Upon addition of the 50S ribosomal subunit IF-1, IF-2 and IF-3 are released leaving the mature 70S translation initiation complex. The polypeptide is Translation initiation factor IF-1, chloroplastic (Cabomba caroliniana (Carolina fanwort)).